The following is a 24-amino-acid chain: Gaegurin-6 (24 aa).

Cysteine 18 and cysteine 24 are disulfide-bonded.

This sequence belongs to the frog skin active peptide (FSAP) family. Brevinin subfamily. Monomer. As to expression, expressed by the skin glands.

The protein localises to the secreted. In terms of biological role, has a non-hemolytic activity. Has a broad spectrum of activity against both Gram-positive and Gram-negative bacteria, fungi and protozoa. This Glandirana rugosa (Japanese wrinkled frog) protein is Gaegurin-6 (GGN6).